The chain runs to 408 residues: Sprouty-related, EVH1 domain-containing protein 3 (408 aa).

The 113-residue stretch at 1-113 (MVRVRAVVMA…KSLLAALAAL (113 aa)) folds into the WH1 domain. The interval 118-226 (LTPSSSSSSS…YEDYRRSGPP (109 aa)) is disordered. Residues 120 to 130 (PSSSSSSSSPS) show a composition bias toward low complexity. The 51-residue stretch at 192–242 (LPFTGIPEPSESLAGAGSQGWGSRGYEDYRRSGPPPPPLALSTCVVRFAKT) folds into the KBD domain. Residue R238 is modified to Asymmetric dimethylarginine. The residue at position 246 (R246) is an Omega-N-methylarginine. A disordered region spans residues 256 to 286 (LPAPLTEAAPPAPPARPPPGPGPTPAPAKAS). The span at 265–281 (PPAPPARPPPGPGPTPA) shows a compositional bias: pro residues. The 112-residue stretch at 294-405 (RCVHCRALFR…CAGCGGRHEE (112 aa)) folds into the SPR domain.

In terms of assembly, interacts with palmitoyltransferase ZDHHC17/HIP14; the interaction leads to palmitoylation of SPRED3. Post-translationally, phosphorylated on tyrosine. In terms of processing, palmitoylated by ZDHHC17/HIP14. Ubiquitinated. Brain specific.

Its subcellular location is the cell membrane. Its function is as follows. Tyrosine kinase substrate that inhibits growth-factor-mediated activation of MAP kinase. Inhibits fibroblast growth factor (FGF)-induced retinal lens fiber differentiation, probably by inhibiting FGF-mediated phosphorylation of ERK1/2. Inhibits TGFB-induced epithelial-to-mesenchymal transition in lens epithelial cells. The polypeptide is Sprouty-related, EVH1 domain-containing protein 3 (Spred3) (Mus musculus (Mouse)).